Reading from the N-terminus, the 314-residue chain is Porphobilinogen deaminase (314 aa).

At Cys249 the chain carries S-(dipyrrolylmethanemethyl)cysteine.

The protein belongs to the HMBS family. In terms of assembly, monomer. Requires dipyrromethane as cofactor.

It carries out the reaction 4 porphobilinogen + H2O = hydroxymethylbilane + 4 NH4(+). It participates in porphyrin-containing compound metabolism; protoporphyrin-IX biosynthesis; coproporphyrinogen-III from 5-aminolevulinate: step 2/4. Its function is as follows. Tetrapolymerization of the monopyrrole PBG into the hydroxymethylbilane pre-uroporphyrinogen in several discrete steps. This is Porphobilinogen deaminase from Brucella anthropi (strain ATCC 49188 / DSM 6882 / CCUG 24695 / JCM 21032 / LMG 3331 / NBRC 15819 / NCTC 12168 / Alc 37) (Ochrobactrum anthropi).